Here is a 383-residue protein sequence, read N- to C-terminus: Putative glutamate--cysteine ligase 2-1 (383 aa).

This sequence belongs to the glutamate--cysteine ligase type 2 family. YbdK subfamily.

It catalyses the reaction L-cysteine + L-glutamate + ATP = gamma-L-glutamyl-L-cysteine + ADP + phosphate + H(+). In terms of biological role, ATP-dependent carboxylate-amine ligase which exhibits weak glutamate--cysteine ligase activity. In Nocardia farcinica (strain IFM 10152), this protein is Putative glutamate--cysteine ligase 2-1.